The sequence spans 588 residues: Beta-(1--&gt;2)glucan export ATP-binding/permease protein NdvA (588 aa).

An ABC transmembrane type-1 domain is found at 21–301; it reads VAVVVIANVI…MRQFVTQIFE (281 aa). Transmembrane regions (helical) follow at residues 22 to 42, 57 to 77, 136 to 156, 158 to 178, 248 to 268, and 272 to 292; these read AVVV…PVLF, PILI…VAVA, THLA…AMDL, LSFV…WVMG, TAST…VKNG, and VGDV…LDQM. The ABC transporter domain maps to 335–569; the sequence is VEFRNINFGF…GGRFTSLLRT (235 aa). 368-375 serves as a coordination point for ATP; that stretch reads GPTGAGKT.

This sequence belongs to the ABC transporter superfamily. Beta-(1--&gt;2)glucan exporter (TC 3.A.1.108.1) family. As to quaternary structure, homodimer.

It is found in the cell inner membrane. It carries out the reaction [(1-&gt;2)-beta-D-glucosyl](n)(in) + ATP + H2O = [(1-&gt;2)-beta-D-glucosyl](n)(out) + ADP + phosphate + H(+). Functionally, involved in beta-(1--&gt;2)glucan export which is required for crown gall tumor formation. Transmembrane domains (TMD) form a pore in the inner membrane and the ATP-binding domain (NBD) is responsible for energy generation. The sequence is that of Beta-(1--&gt;2)glucan export ATP-binding/permease protein NdvA from Rhizobium radiobacter (Agrobacterium tumefaciens).